We begin with the raw amino-acid sequence, 513 residues long: Solute carrier family 2, facilitated glucose transporter member 7 (513 aa).

Residues 1–21 (MEDKEIGTPLPLPHSEARLQP) lie on the Cytoplasmic side of the membrane. The helical transmembrane segment at 22-42 (TLVLTTLSAAFGSVFQYGYNI) threads the bilayer. Residues 43 to 78 (AVINTPHKVFKSFYNDTHFERHGTFMDESTLLLLWS) are Extracellular-facing. An N-linked (GlcNAc...) asparagine glycan is attached at Asn57. The chain crosses the membrane as a helical span at residues 79–99 (CTVSMFPLGGLLGSLVVGLMV). At 100-107 (NKWGRKGT) the chain is on the cytoplasmic side. The helical transmembrane segment at 108 to 128 (LLINNVFAITSAVLMGVSKVA) threads the bilayer. Over 129–138 (RAFELIILSR) the chain is Extracellular. The chain crosses the membrane as a helical span at residues 139–159 (VLVGICAGIAYSTLPMYLGEL). Over 160 to 172 (APQNLRGALGTMT) the chain is Cytoplasmic. A helical membrane pass occupies residues 173-193 (EVFVIIGVLLAQIFSLQAILG). The Extracellular portion of the chain corresponds to 194–198 (NATGW). A helical transmembrane segment spans residues 199–219 (PILLALTGVPAVIQLLSLPFF). Residues 220–282 (PESPRYTLIE…LNLFTFRPLR (63 aa)) are Cytoplasmic-facing. A helical transmembrane segment spans residues 283 to 303 (WQLISIVVLMAGQQLSGINAV). D-glucose contacts are provided by residues 295-296 (QQ) and Asn301. Residues 304–322 (NYYADVIYTSAGVDPTQSQ) are Extracellular-facing. The chain crosses the membrane as a helical span at residues 323-343 (YVTLGSGVINLVMTLVSAVII). Asn332 contributes to the D-glucose binding site. Over 344–351 (ERLGRRIL) the chain is Cytoplasmic. Residues 352–372 (LLSGYAICCSACLVLTVALLL) form a helical membrane-spanning segment. The Extracellular segment spans residues 373-380 (QSTAPELS). The chain crosses the membrane as a helical span at residues 381 to 401 (YLSIVCVFSYIVGHSIGPSPV). Topologically, residues 402–416 (PSVVRTEIVLQSSRT) are cytoplasmic. The chain crosses the membrane as a helical span at residues 417–437 (AAFTVDGAVHWLTNFIVGLTF). Over 438–446 (PSIQVAIGA) the chain is Extracellular. The helical transmembrane segment at 447–467 (YSFLVFAGVCILTAAYIYVVI) threads the bilayer. Residues 468–513 (PETKGRTFVEINCAFAKRNGVEFPEEKEVATAKPHTPSLPTKETAF) lie on the Cytoplasmic side of the membrane. Positions 494–513 (KEVATAKPHTPSLPTKETAF) are disordered.

The protein belongs to the major facilitator superfamily. Sugar transporter (TC 2.A.1.1) family. Glucose transporter subfamily.

Its subcellular location is the cell membrane. The protein localises to the apical cell membrane. It catalyses the reaction D-glucose(out) = D-glucose(in). The catalysed reaction is D-fructose(out) = D-fructose(in). In terms of biological role, probable sugar transporter. Even if its physiological substrate is subject to discussion, it is able to transport glucose and fructose. Does not transport galactose, 2-deoxy-d-glucose and xylose. The polypeptide is Solute carrier family 2, facilitated glucose transporter member 7 (Mus musculus (Mouse)).